Reading from the N-terminus, the 136-residue chain is NADPH-dependent 7-cyano-7-deazaguanine reductase (136 aa).

Residue C50 is the Thioimide intermediate of the active site. Catalysis depends on D57, which acts as the Proton donor. Substrate-binding positions include 72 to 74 (YEL) and 91 to 92 (HE).

Belongs to the GTP cyclohydrolase I family. QueF type 1 subfamily.

Its subcellular location is the cytoplasm. The catalysed reaction is 7-aminomethyl-7-carbaguanine + 2 NADP(+) = 7-cyano-7-deazaguanine + 2 NADPH + 3 H(+). The protein operates within tRNA modification; tRNA-queuosine biosynthesis. Functionally, catalyzes the NADPH-dependent reduction of 7-cyano-7-deazaguanine (preQ0) to 7-aminomethyl-7-deazaguanine (preQ1). In Prochlorococcus marinus (strain MIT 9515), this protein is NADPH-dependent 7-cyano-7-deazaguanine reductase.